The primary structure comprises 149 residues: Calmodulin-2 (149 aa).

N-acetylalanine is present on A2. EF-hand domains lie at 8 to 43, 44 to 79, 81 to 116, and 117 to 149; these read EQIA…LGQN, PTEG…KMKD, DSEE…PGEK, and LTDE…MTSK. Ca(2+) contacts are provided by D21, D23, N25, N27, E32, D57, D59, N61, T63, E68, D94, D96, N98, and E105. Position 116 is an N6,N6,N6-trimethyllysine (K116). Residues D130, D132, D134, Q136, and E141 each contribute to the Ca(2+) site.

It belongs to the calmodulin family.

In terms of biological role, calmodulin mediates the control of a large number of enzymes, ion channels and other proteins by Ca(2+). Among the enzymes to be stimulated by the calmodulin-Ca(2+) complex are a number of protein kinases and phosphatases. In Branchiostoma floridae (Florida lancelet), this protein is Calmodulin-2 (CAM2).